The sequence spans 538 residues: Cytochrome c-552 (538 aa).

The N-terminal stretch at 1 to 55 (MKIYLRFVWILIIILNFLLNLFITTNGVIIVNAFKKSLIVAASFASLSLFNSATA) is a signal peptide. His-133 contacts heme c. 3 residues coordinate heme: Cys-161, Cys-164, and Lys-165. Cys-199, Cys-202, His-203, Cys-264, Cys-267, and His-268 together coordinate heme c. 4 residues coordinate Ca(2+): Glu-270, Tyr-271, Lys-316, and Gln-318. Tyr-271 serves as a coordination point for substrate. His-319 provides a ligand contact to substrate. The heme c site is built by His-330, Cys-337, Cys-340, His-341, His-356, Cys-369, Cys-372, His-373, and His-448.

Belongs to the cytochrome c-552 family. It depends on Ca(2+) as a cofactor. The cofactor is heme c.

It is found in the periplasm. The enzyme catalyses 6 Fe(III)-[cytochrome c] + NH4(+) + 2 H2O = 6 Fe(II)-[cytochrome c] + nitrite + 8 H(+). It functions in the pathway nitrogen metabolism; nitrate reduction (assimilation). In terms of biological role, catalyzes the reduction of nitrite to ammonia, consuming six electrons in the process. In Haemophilus influenzae (strain ATCC 51907 / DSM 11121 / KW20 / Rd), this protein is Cytochrome c-552.